A 412-amino-acid polypeptide reads, in one-letter code: Proteasome-activating nucleotidase 2 (412 aa).

Residues 28–74 (LRQHFERMVDVNRELDQRLQNADDRHAELVDEVDQMKARNEALKTAS) adopt a coiled-coil conformation. ATP is bound by residues 196–201 (GTGKTM) and His335. The tract at residues 409 to 412 (DYQY) is docks into pockets in the proteasome alpha-ring to cause gate opening.

This sequence belongs to the AAA ATPase family. As to quaternary structure, homohexamer. The hexameric complex has a two-ring architecture resembling a top hat that caps the 20S proteasome core at one or both ends. Upon ATP-binding, the C-terminus of PAN interacts with the alpha-rings of the proteasome core by binding to the intersubunit pockets.

It localises to the cytoplasm. Functionally, ATPase which is responsible for recognizing, binding, unfolding and translocation of substrate proteins into the archaeal 20S proteasome core particle. Is essential for opening the gate of the 20S proteasome via an interaction with its C-terminus, thereby allowing substrate entry and access to the site of proteolysis. Thus, the C-termini of the proteasomal ATPase function like a 'key in a lock' to induce gate opening and therefore regulate proteolysis. Unfolding activity requires energy from ATP hydrolysis, whereas ATP binding alone promotes ATPase-20S proteasome association which triggers gate opening, and supports translocation of unfolded substrates. The chain is Proteasome-activating nucleotidase 2 from Haloferax volcanii (strain ATCC 29605 / DSM 3757 / JCM 8879 / NBRC 14742 / NCIMB 2012 / VKM B-1768 / DS2) (Halobacterium volcanii).